We begin with the raw amino-acid sequence, 477 residues long: Protein DETOXIFICATION 5 (477 aa).

The next 12 membrane-spanning stretches (helical) occupy residues 38-58, 72-92, 113-133, 146-166, 187-207, 211-231, 263-283, 292-312, 333-353, 376-396, 411-431, and 436-456; these read AAPMATVTVSQYLLPVISVMV, LATAFANVSGFGIMYGLVGAL, FSAIVSNVPIVVLISILWFYM, ISKVAGSYAVCLIPALLAQAV, AITTLLFHIPVCLILVYAFGL, GAALAIGLSYWFNVLILALYV, AAMTTIEWSLFELLILSSGLL, VLSICLTTSSLHCVIPMGIGA, AVFAGIFLWFLEATICSTLLF, LSSLLCLSFMVDGFSSVLDGV, VVAYYLLGAPVGFFLGFWGHM, and LWIGVIVGSTAQGIILAIVTA.

Belongs to the multi antimicrobial extrusion (MATE) (TC 2.A.66.1) family.

The protein localises to the membrane. The chain is Protein DETOXIFICATION 5 from Arabidopsis thaliana (Mouse-ear cress).